The chain runs to 630 residues: Protein mono-ADP-ribosyltransferase PARP6 (630 aa).

Cysteine 237 carries the ADP-ribosylcysteine modification. Residues 394–620 (EMTQGSYLEI…QDPKIQKEIM (227 aa)) form the PARP catalytic domain. ADP-ribosyl aspartic acid is present on aspartate 600.

The protein belongs to the ARTD/PARP family. Post-translationally, auto-mono-ADP-ribosylated.

The catalysed reaction is L-aspartyl-[protein] + NAD(+) = 4-O-(ADP-D-ribosyl)-L-aspartyl-[protein] + nicotinamide. The enzyme catalyses L-cysteinyl-[protein] + NAD(+) = S-(ADP-D-ribosyl)-L-cysteinyl-[protein] + nicotinamide + H(+). Mono-ADP-ribosyltransferase that mediates mono-ADP-ribosylation of target proteins. This Mus musculus (Mouse) protein is Protein mono-ADP-ribosyltransferase PARP6.